Consider the following 399-residue polypeptide: Probable sugar efflux transporter (399 aa).

The next 12 membrane-spanning stretches (helical) occupy residues 15–35, 50–70, 81–101, 103–123, 136–156, 168–188, 209–229, 246–266, 273–293, 301–321, 333–353, and 364–384; these read VVTLAIAAFIFNTTEFAPVGL, VGMMLTIYAWVVALMSLPFML, LIGLFILFIASHVLSFFAWNF, VLVISRIGIAFAHAVFWSITS, AQALSLIATGTALAMVFGIPI, MTFLAIGLGALATLACLVKLL, PALVSVYILTVVVVTAHYTAY, FATVLLLILGGAGIIGSILFG, ASGLISLAIALLLACLLLLLP, LMLLSIFWGVAIMIIGLGMQV, VAMSLFSGIFNIGIGAGALVG, and SVGYVGAIPALVALVWSLMIF.

The protein belongs to the major facilitator superfamily. SotB (TC 2.A.1.2) family.

It is found in the cell inner membrane. In terms of biological role, involved in the efflux of sugars. The physiological role may be the reduction of the intracellular concentration of toxic sugars or sugar metabolites. In Klebsiella pneumoniae subsp. pneumoniae (strain ATCC 700721 / MGH 78578), this protein is Probable sugar efflux transporter.